The sequence spans 85 residues: Small ribosomal subunit protein eS21 (85 aa).

This sequence belongs to the eukaryotic ribosomal protein eS21 family. In terms of assembly, component of the 40S small ribosomal subunit.

The protein localises to the cytoplasm. Its subcellular location is the cytosol. The protein resides in the rough endoplasmic reticulum. The sequence is that of Small ribosomal subunit protein eS21 (RPS21) from Branchiostoma belcheri (Amphioxus).